Reading from the N-terminus, the 355-residue chain is 3-dehydroquinate synthase (355 aa).

NAD(+) contacts are provided by residues 105 to 109 (GVVGD), 129 to 130 (TS), Lys142, Lys151, and 169 to 172 (TLKT). The Zn(2+) site is built by Glu184, His246, and His263.

It belongs to the sugar phosphate cyclases superfamily. Dehydroquinate synthase family. The cofactor is NAD(+). It depends on Co(2+) as a cofactor. Requires Zn(2+) as cofactor.

The protein resides in the cytoplasm. It catalyses the reaction 7-phospho-2-dehydro-3-deoxy-D-arabino-heptonate = 3-dehydroquinate + phosphate. Its pathway is metabolic intermediate biosynthesis; chorismate biosynthesis; chorismate from D-erythrose 4-phosphate and phosphoenolpyruvate: step 2/7. Its function is as follows. Catalyzes the conversion of 3-deoxy-D-arabino-heptulosonate 7-phosphate (DAHP) to dehydroquinate (DHQ). This chain is 3-dehydroquinate synthase, found in Streptococcus agalactiae serotype V (strain ATCC BAA-611 / 2603 V/R).